The sequence spans 583 residues: MATILKQKLKTFFVPTAITLLLSACNSTSLFENSVTYLIKQEAYASSEFYINKAEQTLNSQDKITYQLLAVRKLIDENKVVEAQNTLNDLTTRLNIMEQNPLQQLEYQLVTAQLAALKGNNHQAEVTLQHISAANLSHSQLLRFYQTQAKIAENSKNTIEAVRIRSLIATQLVDNKLRQENNDKIWSLLRNANRGMLSSAQAGAGEMELAGWLALIEIYNQSVSTPAQMPQNINYWKRLYPNHSALAVMPTELQRVFNFQQTLLNNVALLLPLSGDAKILGEIIKKGFDDAKEQDPTIVQVFDTDSNSIENILMQAKQQGAQMIIGPLLKSRVNQMLASDQIRDINVLALNATQDVKPIVGVCYYGLSPEAEARSGADRLSRDGYTKAIVVAARDEFGQRSAEAFAQRWRQLTNTDADIRYYNQPLDVITTIQNSANNLQETALYALGNAEQLLEIKQGLENSTIAGQLAIYTASRSNSPNNGIEFRTAMEGVKFSEIPLLADHNSNEYQKAYSLADSDFSMMRLYAMGSDTWALANKFNEFRQIPGYSISGLTGNLNAGPNCNIERNMTWLQYHNGAVETTN.

An N-terminal signal peptide occupies residues 1–24 (MATILKQKLKTFFVPTAITLLLSA). Cys-25 carries the N-palmitoyl cysteine lipid modification. Cys-25 is lipidated: S-diacylglycerol cysteine.

The protein belongs to the LpoA family. In terms of assembly, interacts with PBP1a.

Its subcellular location is the cell outer membrane. Its function is as follows. Regulator of peptidoglycan synthesis that is essential for the function of penicillin-binding protein 1A (PBP1a). This Haemophilus ducreyi (strain 35000HP / ATCC 700724) protein is Penicillin-binding protein activator LpoA.